The primary structure comprises 175 residues: uncharacterized protein (175 aa).

This is an uncharacterized protein from Human cytomegalovirus (strain AD169) (HHV-5).